Here is a 364-residue protein sequence, read N- to C-terminus: tRNA 2-selenouridine synthase (364 aa).

In terms of domain architecture, Rhodanese spans 14–137; that stretch reads LLADTPLIDV…LRQTAIQATW (124 aa). Residue Cys97 is the S-selanylcysteine intermediate of the active site.

This sequence belongs to the SelU family. As to quaternary structure, monomer.

It carries out the reaction 5-methylaminomethyl-2-thiouridine(34) in tRNA + selenophosphate + (2E)-geranyl diphosphate + H2O + H(+) = 5-methylaminomethyl-2-selenouridine(34) in tRNA + (2E)-thiogeraniol + phosphate + diphosphate. It catalyses the reaction 5-methylaminomethyl-2-thiouridine(34) in tRNA + (2E)-geranyl diphosphate = 5-methylaminomethyl-S-(2E)-geranyl-thiouridine(34) in tRNA + diphosphate. The catalysed reaction is 5-methylaminomethyl-S-(2E)-geranyl-thiouridine(34) in tRNA + selenophosphate + H(+) = 5-methylaminomethyl-2-(Se-phospho)selenouridine(34) in tRNA + (2E)-thiogeraniol. The enzyme catalyses 5-methylaminomethyl-2-(Se-phospho)selenouridine(34) in tRNA + H2O = 5-methylaminomethyl-2-selenouridine(34) in tRNA + phosphate. Functionally, involved in the post-transcriptional modification of the uridine at the wobble position (U34) of tRNA(Lys), tRNA(Glu) and tRNA(Gln). Catalyzes the conversion of 2-thiouridine (S2U-RNA) to 2-selenouridine (Se2U-RNA). Acts in a two-step process involving geranylation of 2-thiouridine (S2U) to S-geranyl-2-thiouridine (geS2U) and subsequent selenation of the latter derivative to 2-selenouridine (Se2U) in the tRNA chain. The protein is tRNA 2-selenouridine synthase of Salmonella agona (strain SL483).